Consider the following 325-residue polypeptide: Putative metal ion transporter ZIPCO (325 aa).

3 helical membrane-spanning segments follow: residues 5–25, 46–66, and 74–94; these read TFLA…PAYI, IASG…VIIL, and LYYI…TDIL. N-linked (GlcNAc...) asparagine glycans are attached at residues Asn106 and Asn160. Transmembrane regions (helical) follow at residues 179–199, 239–259, 264–284, and 296–316; these read FFIV…MGSL, IYAW…IFSF, FVEI…SFNM, and HFIS…MILF.

The protein localises to the cytoplasmic vesicle membrane. In terms of biological role, putative transporter for the divalent zinc and iron cations. This chain is Putative metal ion transporter ZIPCO, found in Plasmodium falciparum (isolate 3D7).